We begin with the raw amino-acid sequence, 413 residues long: Serine/threonine-protein phosphatase 2A 55 kDa regulatory subunit B beta isoform (413 aa).

4 WD repeats span residues 1-31 (EFNHTGELLATGDKGGRVVIFQREQESKNQV), 57-98 (EIEE…KRPE), 141-179 (AHTYHINSISVNSDYETYMSADDLRINLWNFEITNQSFN), and 190-230 (ELTE…LCDR). S245 carries the post-translational modification Phosphoserine. WD repeat units lie at residues 249–287 (EIISSISDVKFSHSGRYIMTRDYLTVKVWDLNMENRPIE), 304–345 (ENDC…DVTL), and 380–412 (DFSKKILHTAWHPSENIIAVAATNNLYIFQDKV). Phosphotyrosine is present on Y265. Position 268 is a phosphothreonine (T268).

It belongs to the phosphatase 2A regulatory subunit B family. In terms of assembly, PP2A consists of a common heterodimeric core enzyme, composed of a 36 kDa catalytic subunit (subunit C) and a 65 kDa constant regulatory subunit (PR65 or subunit A), that associates with a variety of regulatory subunits. Proteins that associate with the core dimer include three families of regulatory subunits B (the R2/B/PR55/B55, R3/B''/PR72/PR130/PR59 and R5/B'/B56 families), the 48 kDa variable regulatory subunit, viral proteins, and cell signaling molecules. Interacts with TOMM22. Interacts with IER5 (via N- and C-terminal regions). In terms of tissue distribution, brain.

Its subcellular location is the cytoplasm. It is found in the cytoskeleton. The protein localises to the membrane. Its function is as follows. The B regulatory subunit might modulate substrate selectivity and catalytic activity, and might also direct the localization of the catalytic enzyme to a particular subcellular compartment. In Oryctolagus cuniculus (Rabbit), this protein is Serine/threonine-protein phosphatase 2A 55 kDa regulatory subunit B beta isoform (PPP2R2B).